The sequence spans 377 residues: Chaperone protein DnaJ (377 aa).

The 66-residue stretch at 5–70 folds into the J domain; the sequence is DYYEVLEVSR…EKRTIYDRYG (66 aa). The CR-type zinc-finger motif lies at 138–215; sequence GCEKKIDITY…CQGKGYHEET (78 aa). Positions 151, 154, 167, 170, 189, 192, 203, and 206 each coordinate Zn(2+). 4 CXXCXGXG motif repeats span residues 151 to 158, 167 to 174, 189 to 196, and 203 to 210; these read CEECGGTG, CDYCGGQG, CPKCHGEG, and CPSCQGKG.

This sequence belongs to the DnaJ family. Homodimer. It depends on Zn(2+) as a cofactor.

It is found in the cytoplasm. Functionally, participates actively in the response to hyperosmotic and heat shock by preventing the aggregation of stress-denatured proteins and by disaggregating proteins, also in an autonomous, DnaK-independent fashion. Unfolded proteins bind initially to DnaJ; upon interaction with the DnaJ-bound protein, DnaK hydrolyzes its bound ATP, resulting in the formation of a stable complex. GrpE releases ADP from DnaK; ATP binding to DnaK triggers the release of the substrate protein, thus completing the reaction cycle. Several rounds of ATP-dependent interactions between DnaJ, DnaK and GrpE are required for fully efficient folding. Also involved, together with DnaK and GrpE, in the DNA replication of plasmids through activation of initiation proteins. This Sulfurovum sp. (strain NBC37-1) protein is Chaperone protein DnaJ.